The primary structure comprises 451 residues: 2-succinylbenzoate--CoA ligase (451 aa).

This sequence belongs to the ATP-dependent AMP-binding enzyme family. MenE subfamily.

It catalyses the reaction 2-succinylbenzoate + ATP + CoA = 2-succinylbenzoyl-CoA + AMP + diphosphate. Its pathway is quinol/quinone metabolism; 1,4-dihydroxy-2-naphthoate biosynthesis; 1,4-dihydroxy-2-naphthoate from chorismate: step 5/7. It participates in quinol/quinone metabolism; menaquinone biosynthesis. Converts 2-succinylbenzoate (OSB) to 2-succinylbenzoyl-CoA (OSB-CoA). This chain is 2-succinylbenzoate--CoA ligase, found in Escherichia coli (strain K12).